Reading from the N-terminus, the 395-residue chain is S-adenosylmethionine synthase (395 aa).

An ATP-binding site is contributed by His15. Asp17 is a Mg(2+) binding site. Glu43 serves as a coordination point for K(+). Glu56 and Gln99 together coordinate L-methionine. The flexible loop stretch occupies residues 99-109; that stretch reads QSADIALGVDE. Residues 174–176, 240–241, Asp249, 255–256, Ala272, and Lys276 each bind ATP; these read DGK, RF, and RK. Asp249 is a binding site for L-methionine. An L-methionine-binding site is contributed by Lys280.

The protein belongs to the AdoMet synthase family. Homotetramer; dimer of dimers. Mg(2+) serves as cofactor. Requires K(+) as cofactor.

Its subcellular location is the cytoplasm. The catalysed reaction is L-methionine + ATP + H2O = S-adenosyl-L-methionine + phosphate + diphosphate. The protein operates within amino-acid biosynthesis; S-adenosyl-L-methionine biosynthesis; S-adenosyl-L-methionine from L-methionine: step 1/1. Catalyzes the formation of S-adenosylmethionine (AdoMet) from methionine and ATP. The overall synthetic reaction is composed of two sequential steps, AdoMet formation and the subsequent tripolyphosphate hydrolysis which occurs prior to release of AdoMet from the enzyme. The protein is S-adenosylmethionine synthase of Alkaliphilus oremlandii (strain OhILAs) (Clostridium oremlandii (strain OhILAs)).